The chain runs to 335 residues: MKMIGFEKPFKLEEGNLFKVYEQRKPTPENDDILVKVNSISVNPVDTKQRQMKVTQAPRVLGFDAIGTVEAIGPDVTLFSPGDVVFYAGSPNRQGSNATYQLVSEAIVAKAPHNISANEAVSLPLTGITAYETFFDTFKISHNPSENVGKSVLIINGAGGVGSIATQIAKRYGLTVITTASRQETTEWCEKMGADIVLNHKEDLVRQFKEKEIPLVDYIFCTYNTDLYYNTMIELIKPLGHITTIVAFNEDQDLNALKLKSITFTHEFMFARPIHRTPDMIKQHEYLEDITKNIELGHYQPTTTQVFEGLSPENLYQAHQLLEKQSMIGKLVINI.

This sequence belongs to the zinc-containing alcohol dehydrogenase family. Quinone oxidoreductase subfamily.

The chain is Zinc-type alcohol dehydrogenase-like protein SAV2186 from Staphylococcus aureus (strain Mu50 / ATCC 700699).